We begin with the raw amino-acid sequence, 191 residues long: MVNGNITFDDYLGLQQCLVEWADSYDSKDWSRLRKCIAPTLRIDYRSFLDKLWEAMPAEEFIAMISDKAVLGDPLLMTQHFIGGTKWEKISDTEVVGVHQLRVPHQRYTDETRSTVAVKGHAHSTNTHWYRKVNGEWKFAGLCPEIRWGEFDFDKVFASGREAFGTEDTAAEGISAKHQQQQHGRVTVSAV.

Residues Tyr25, Tyr45, and Phe48 each contribute to the substrate site. Active-site residues include His80 and His105. Residue Asn126 coordinates substrate.

The protein belongs to the scytalone dehydratase family. Homotrimer. Each subunit contains an active site, located in the central part of the hydrophobic core of the monomer, which functions independently.

It localises to the endosome. It catalyses the reaction scytalone = 1,3,8-trihydroxynaphthalene + H2O. It participates in pigment biosynthesis; melanin biosynthesis. In terms of biological role, scytalone dehydratase involved the biosynthesis of dihydroxynaphthalene (DHN)-melanin, a bluish-green pigment forming a dark layer in the conidial wall that protects the conidia from UV radiations. The first step of the pathway is the production of the pentaketide 1,3,6,8-tetrahydroxynaphthalene (1,3,6,8-THN or T4HN) by the polyketide synthase PfmaE though condensation of acetyl-CoA with malonyl-CoA. T4HN is not stable and easily oxidizes into the stable form flaviolin. T4HN is also substrate of the hydroxynaphthalene reductase PfmaG to yield scytalone. The scytalone dehydratase PfmaJ then reduces scytalone to 1,3,8-THN. 1,3,8-THN is then substrate of the hydroxynaphthalene reductase PfmaI to yield vermelone. Vermelone is further converted by the multicopper oxidase PfmaD to 1,8-DHN. Finally the laccase PFICI_06862 transforms 1,8-DHN to DHN-melanin. The roles of the 5-oxoprolinase PfmaA and the proline iminopeptidase PfmaB within the cluster have not been elucidated yet. This is Scytalone dehydratase PfmaJ from Pestalotiopsis fici (strain W106-1 / CGMCC3.15140).